Consider the following 24-residue polypeptide: Snake venom metalloproteinase Batx-1 (24 aa).

Residues 1–24 (YIELAVVADHGIFTKYNSNLNTIR) enclose the Peptidase M12B domain. Glu3 lines the Ca(2+) pocket.

It belongs to the venom metalloproteinase (M12B) family. P-I subfamily. As to quaternary structure, monomer. Requires Zn(2+) as cofactor. In terms of processing, the N-terminus is blocked. Post-translationally, contains 3 disulfide bonds. As to expression, expressed by the venom gland.

The protein resides in the secreted. Inhibited by EDTA, and o-phenanthroline, but not inhibited by PMSF, pepstatin A, and aprotinin. Its function is as follows. Zinc metalloproteinase that exhits a weak hemorrhagic activity. Degrades preferentially the Aalpha- (FGA) and Bbeta-chains (FGB) of fibrinogen, and partially degrades gamma-chain (FGG) at higher concentration. Induces a mild myotoxicity, but lacks coagulant activity on human plasma or bovin fibrinogen and defibrinating activity. The protein is Snake venom metalloproteinase Batx-1 of Bothrops atrox (Barba amarilla).